Reading from the N-terminus, the 89-residue chain is Small ribosomal subunit protein uS15 (89 aa).

Belongs to the universal ribosomal protein uS15 family. In terms of assembly, part of the 30S ribosomal subunit. Forms a bridge to the 50S subunit in the 70S ribosome, contacting the 23S rRNA.

One of the primary rRNA binding proteins, it binds directly to 16S rRNA where it helps nucleate assembly of the platform of the 30S subunit by binding and bridging several RNA helices of the 16S rRNA. Its function is as follows. Forms an intersubunit bridge (bridge B4) with the 23S rRNA of the 50S subunit in the ribosome. The sequence is that of Small ribosomal subunit protein uS15 from Lysinibacillus sphaericus (strain C3-41).